Reading from the N-terminus, the 155-residue chain is MKSLRLLAVGKLKTPFWQQAAAHYLERLRHTWRVTETLVRDGDAALPPAKRNADEGARLLAALGPADIVVCMDERGKAYTSREFAALLDRLTENATAVPCFVIGGAYGLDDAVLKRATLRVCLGPMTFPHEMARVVLLEQLYRADCILRRSPYHH.

Residues Gly104 and 123 to 128 (LGPMTF) contribute to the S-adenosyl-L-methionine site.

It belongs to the RNA methyltransferase RlmH family. As to quaternary structure, homodimer.

The protein resides in the cytoplasm. The catalysed reaction is pseudouridine(1915) in 23S rRNA + S-adenosyl-L-methionine = N(3)-methylpseudouridine(1915) in 23S rRNA + S-adenosyl-L-homocysteine + H(+). Functionally, specifically methylates the pseudouridine at position 1915 (m3Psi1915) in 23S rRNA. The sequence is that of Ribosomal RNA large subunit methyltransferase H from Nitratidesulfovibrio vulgaris (strain DSM 19637 / Miyazaki F) (Desulfovibrio vulgaris).